A 274-amino-acid chain; its full sequence is 3-methyl-2-oxobutanoate hydroxymethyltransferase (274 aa).

Mg(2+)-binding residues include aspartate 46 and aspartate 85. 3-methyl-2-oxobutanoate is bound by residues aspartate 46–serine 47, aspartate 85, and lysine 115. Glutamate 117 contacts Mg(2+). The active-site Proton acceptor is glutamate 184.

The protein belongs to the PanB family. As to quaternary structure, homodecamer; pentamer of dimers. Mg(2+) serves as cofactor.

It localises to the cytoplasm. The catalysed reaction is 3-methyl-2-oxobutanoate + (6R)-5,10-methylene-5,6,7,8-tetrahydrofolate + H2O = 2-dehydropantoate + (6S)-5,6,7,8-tetrahydrofolate. Its pathway is cofactor biosynthesis; coenzyme A biosynthesis. Catalyzes the reversible reaction in which hydroxymethyl group from 5,10-methylenetetrahydrofolate is transferred onto alpha-ketoisovalerate to form ketopantoate. This Halobacterium salinarum (strain ATCC 29341 / DSM 671 / R1) protein is 3-methyl-2-oxobutanoate hydroxymethyltransferase.